A 126-amino-acid polypeptide reads, in one-letter code: Fluoride-specific ion channel FluC (126 aa).

The next 4 membrane-spanning stretches (helical) occupy residues 7–24, 35–55, 69–89, and 98–118; these read LWVS…YFLS, FPWG…LFLV, LLIA…AYES, and WGLF…AVLG. The Na(+) site is built by Gly77 and Thr80.

Belongs to the fluoride channel Fluc/FEX (TC 1.A.43) family.

The protein localises to the cell inner membrane. It catalyses the reaction fluoride(in) = fluoride(out). Its activity is regulated as follows. Na(+) is not transported, but it plays an essential structural role and its presence is essential for fluoride channel function. In terms of biological role, fluoride-specific ion channel. Important for reducing fluoride concentration in the cell, thus reducing its toxicity. The polypeptide is Fluoride-specific ion channel FluC (Koribacter versatilis (strain Ellin345)).